The following is a 223-amino-acid chain: Deoxyribose-phosphate aldolase (223 aa).

Aspartate 92 functions as the Proton donor/acceptor in the catalytic mechanism. Catalysis depends on lysine 154, which acts as the Schiff-base intermediate with acetaldehyde. Catalysis depends on lysine 182, which acts as the Proton donor/acceptor.

Belongs to the DeoC/FbaB aldolase family. DeoC type 1 subfamily.

Its subcellular location is the cytoplasm. The enzyme catalyses 2-deoxy-D-ribose 5-phosphate = D-glyceraldehyde 3-phosphate + acetaldehyde. It functions in the pathway carbohydrate degradation; 2-deoxy-D-ribose 1-phosphate degradation; D-glyceraldehyde 3-phosphate and acetaldehyde from 2-deoxy-alpha-D-ribose 1-phosphate: step 2/2. In terms of biological role, catalyzes a reversible aldol reaction between acetaldehyde and D-glyceraldehyde 3-phosphate to generate 2-deoxy-D-ribose 5-phosphate. The polypeptide is Deoxyribose-phosphate aldolase (Haemophilus influenzae (strain PittEE)).